The following is a 103-amino-acid chain: Small ribosomal subunit protein uS10 (103 aa).

This sequence belongs to the universal ribosomal protein uS10 family. Part of the 30S ribosomal subunit.

Functionally, involved in the binding of tRNA to the ribosomes. This is Small ribosomal subunit protein uS10 from Buchnera aphidicola subsp. Acyrthosiphon pisum (strain 5A).